A 263-amino-acid polypeptide reads, in one-letter code: Aminoglycoside 3'-phosphotransferase (263 aa).

The Proton acceptor role is filled by D189.

The protein belongs to the aminoglycoside phosphotransferase family.

The catalysed reaction is kanamycin A + ATP = kanamycin 3'-phosphate + ADP + H(+). Functionally, resistance to kanamycin and structurally-related aminoglycosides, including amikacin. The chain is Aminoglycoside 3'-phosphotransferase (aphA) from Staphylococcus aureus.